The chain runs to 1488 residues: Calmodulin binding protein PICBP (1488 aa).

Disordered stretches follow at residues 1 to 31, 63 to 112, 280 to 329, and 378 to 414; these read MSNPMFPEKWEESSTSKSSRRVHKRRERKMW, TAES…SRIS, GPLG…GRSS, and HDHDDGKVDGTTSDGTVGDNEEVCREGSSGELREEDG. A compositionally biased stretch (basic residues) spans 18–31; sequence SSRRVHKRRERKMW. Residues 76-86 show a composition bias toward basic and acidic residues; sequence DDSRTYSKSSD. Over residues 98–107 the composition is skewed to basic residues; it reads SVKRRAKSKS. Positions 297–312 are enriched in acidic residues; sequence DNVDGDSDEEVFEEEV. Calmodulin-binding stretches follow at residues 493-592 and 831-938; these read TFHM…SLIP and NSLK…DIVL. 2 disordered regions span residues 816 to 844 and 941 to 971; these read IPDSSSDEESVSESSNSLKEEKEHQGETK and HDTPKQTKNSDTPRNNDETKEGKPRVEEGCE. Composition is skewed to basic and acidic residues over residues 833–844 and 954–971; these read LKEEKEHQGETK and RNNDETKEGKPRVEEGCE. Residues 1135–1229 are calmodulin-binding; sequence EKRVKGWNNV…SLLAQAFDTI (95 aa). 2 disordered regions span residues 1232-1252 and 1316-1340; these read QDMGSGSTPGSAASSRNISRQ and EKNQTLPEETRKEEEEEELKEDTSV. Over residues 1235–1252 the composition is skewed to low complexity; sequence GSGSTPGSAASSRNISRQ. A compositionally biased stretch (basic and acidic residues) spans 1316-1328; it reads EKNQTLPEETRKE. The interval 1379-1483 is calmodulin-binding; that stretch reads RQKSETLQVS…QLLVQAFESL (105 aa).

Its function is as follows. Binds calmodulin in a calcium-dependent manner in vitro. May play a role in general plant defense including R gene-mediated responses. The chain is Calmodulin binding protein PICBP from Arabidopsis thaliana (Mouse-ear cress).